Consider the following 226-residue polypeptide: Large ribosomal subunit protein uL1 (226 aa).

It belongs to the universal ribosomal protein uL1 family. As to quaternary structure, part of the 50S ribosomal subunit.

Functionally, binds directly to 23S rRNA. The L1 stalk is quite mobile in the ribosome, and is involved in E site tRNA release. Its function is as follows. Protein L1 is also a translational repressor protein, it controls the translation of the L11 operon by binding to its mRNA. This is Large ribosomal subunit protein uL1 from Mycoplasma capricolum subsp. capricolum (strain California kid / ATCC 27343 / NCTC 10154).